A 258-amino-acid chain; its full sequence is Phosphate import ATP-binding protein PstB (258 aa).

One can recognise an ABC transporter domain in the interval 12–253 (IEVKNLNFYY…PARKETEDYI (242 aa)). 44 to 51 (GPSGCGKS) lines the ATP pocket.

The protein belongs to the ABC transporter superfamily. Phosphate importer (TC 3.A.1.7) family. As to quaternary structure, the complex is composed of two ATP-binding proteins (PstB), two transmembrane proteins (PstC and PstA) and a solute-binding protein (PstS).

It is found in the cell inner membrane. It carries out the reaction phosphate(out) + ATP + H2O = ADP + 2 phosphate(in) + H(+). In terms of biological role, part of the ABC transporter complex PstSACB involved in phosphate import. Responsible for energy coupling to the transport system. The sequence is that of Phosphate import ATP-binding protein PstB from Bordetella avium (strain 197N).